The following is a 148-amino-acid chain: Putative nickel-responsive regulator (148 aa).

Ni(2+) is bound by residues H88, H99, H101, and C107.

The protein belongs to the transcriptional regulatory CopG/NikR family. Homotetramer. Ni(2+) serves as cofactor.

Functionally, transcriptional regulator. This is Putative nickel-responsive regulator from Helicobacter pylori (strain ATCC 700392 / 26695) (Campylobacter pylori).